A 451-amino-acid chain; its full sequence is Phosphoglucosamine mutase (451 aa).

Serine 104 acts as the Phosphoserine intermediate in catalysis. Positions 104, 249, 251, and 253 each coordinate Mg(2+). Serine 104 bears the Phosphoserine mark.

It belongs to the phosphohexose mutase family. The cofactor is Mg(2+). Post-translationally, activated by phosphorylation.

It carries out the reaction alpha-D-glucosamine 1-phosphate = D-glucosamine 6-phosphate. Catalyzes the conversion of glucosamine-6-phosphate to glucosamine-1-phosphate. The polypeptide is Phosphoglucosamine mutase (Psychrobacter sp. (strain PRwf-1)).